A 185-amino-acid polypeptide reads, in one-letter code: Cytidylate kinase (185 aa).

Residue 8-16 participates in ATP binding; sequence GPPGSGKTT.

Belongs to the cytidylate kinase family. Type 2 subfamily.

Its subcellular location is the cytoplasm. The enzyme catalyses CMP + ATP = CDP + ADP. It catalyses the reaction dCMP + ATP = dCDP + ADP. This is Cytidylate kinase from Desulfurococcus amylolyticus (strain DSM 18924 / JCM 16383 / VKM B-2413 / 1221n) (Desulfurococcus kamchatkensis).